The following is a 235-amino-acid chain: BPI fold-containing family A member 2 (235 aa).

The signal sequence occupies residues 1-20 (MFQLGSLVVLCGLLIGNSES). Cysteine 161 and cysteine 204 form a disulfide bridge.

Belongs to the BPI/LBP/Plunc superfamily. Plunc family. In terms of tissue distribution, predominates in the parotid glands, present in smaller amounts (1/10) in the submaxillary glands and in the sublingual glands, and at lower amount in the pancreas but undetectable in the liver. Found also in lacrimal gland.

The protein localises to the secreted. Its function is as follows. Has strong antibacterial activity against P.aeruginosa. The polypeptide is BPI fold-containing family A member 2 (Bpifa2) (Mus musculus (Mouse)).